The sequence spans 638 residues: Phosphomethylpyrimidine synthase (638 aa).

Residues N233, M262, Y291, H327, 347-349 (SRG), 388-391 (DGLR), and E427 contribute to the substrate site. H431 is a binding site for Zn(2+). Residue Y454 participates in substrate binding. A Zn(2+)-binding site is contributed by H495. C575, C578, and C583 together coordinate [4Fe-4S] cluster.

The protein belongs to the ThiC family. As to quaternary structure, homodimer. Requires [4Fe-4S] cluster as cofactor.

The catalysed reaction is 5-amino-1-(5-phospho-beta-D-ribosyl)imidazole + S-adenosyl-L-methionine = 4-amino-2-methyl-5-(phosphooxymethyl)pyrimidine + CO + 5'-deoxyadenosine + formate + L-methionine + 3 H(+). The protein operates within cofactor biosynthesis; thiamine diphosphate biosynthesis. In terms of biological role, catalyzes the synthesis of the hydroxymethylpyrimidine phosphate (HMP-P) moiety of thiamine from aminoimidazole ribotide (AIR) in a radical S-adenosyl-L-methionine (SAM)-dependent reaction. The chain is Phosphomethylpyrimidine synthase from Saccharophagus degradans (strain 2-40 / ATCC 43961 / DSM 17024).